Reading from the N-terminus, the 210-residue chain is Putative 3-methyladenine DNA glycosylase (210 aa).

The tract at residues 180–210 (SRPPPGAAAARAARAPAAPAPRPRRPRGSGP) is disordered. Low complexity predominate over residues 186–196 (AAAARAARAPA). Over residues 201-210 (RPRRPRGSGP) the composition is skewed to basic residues.

This sequence belongs to the DNA glycosylase MPG family.

The protein is Putative 3-methyladenine DNA glycosylase of Anaeromyxobacter dehalogenans (strain 2CP-1 / ATCC BAA-258).